A 415-amino-acid chain; its full sequence is Methylmalonic aciduria type A homolog, mitochondrial (415 aa).

A mitochondrion-targeting transit peptide spans 1–62 (MTISTLLLSP…LLSDGFRRTL (62 aa)). GTP is bound by residues 147–155 (GPPGAGKST), aspartate 289, and 325–327 (SAR).

It belongs to the SIMIBI class G3E GTPase family. ArgK/MeaB subfamily. In terms of assembly, homodimer. Interacts with MMUT (the apoenzyme form); the interaction is GTP dependent.

It localises to the mitochondrion. Its subcellular location is the cytoplasm. The catalysed reaction is GTP + H2O = GDP + phosphate + H(+). GTPase activity is stimulated by MMUT. GTPase, binds and hydrolyzes GTP. Involved in intracellular vitamin B12 metabolism, mediates the transport of cobalamin (Cbl) into mitochondria for the final steps of adenosylcobalamin (AdoCbl) synthesis. Functions as a G-protein chaperone that assists AdoCbl cofactor delivery from MMAB to the methylmalonyl-CoA mutase (MMUT). Plays a dual role as both a protectase and a reactivase for MMUT. Protects MMUT from progressive inactivation by oxidation by decreasing the rate of the formation of the oxidized inactive cofactor hydroxocobalamin (OH2Cbl). Additionally acts a reactivase by promoting the replacement of OH2Cbl by the active cofactor AdoCbl, restoring the activity of MMUT in the presence and hydrolysis of GTP. The polypeptide is Methylmalonic aciduria type A homolog, mitochondrial (Mus musculus (Mouse)).